Here is a 168-residue protein sequence, read N- to C-terminus: Alpha-amylase/trypsin inhibitor CM3 (168 aa).

The signal sequence occupies residues 1 to 25; the sequence is MACKSSCSLLLLAAVLLSVLAAASA.

It belongs to the protease inhibitor I6 (cereal trypsin/alpha-amylase inhibitor) family. Subunit of the tetrameric inhibitor. In terms of processing, five disulfide bonds, which are essential for the inhibitor activity, are probably present. Developing endosperm.

It localises to the secreted. In terms of biological role, alpha-amylase/trypsin inhibitor. It could be involved in insect defense mechanisms. This chain is Alpha-amylase/trypsin inhibitor CM3, found in Triticum aestivum (Wheat).